Reading from the N-terminus, the 411-residue chain is Replication factor C subunit 2 (411 aa).

The interval 1-36 (MADFFNLKARQQAAAQASSSKTPTSKQESNRLQPWV) is disordered. Residues 11 to 27 (QQAAAQASSSKTPTSKQ) show a composition bias toward low complexity. ATP contacts are provided by residues Val36, Arg40, 73-81 (GPPGTGKTS), Asn195, and Arg253.

It belongs to the activator 1 small subunits family. In terms of assembly, heteropentamer of subunits RFC1, RFC2, RFC3, RFC4 and RFC5 that forms a complex with PCNA in the presence of ATP.

Its subcellular location is the nucleus. In terms of biological role, the elongation of primed DNA templates by DNA polymerase delta and epsilon requires the action of the accessory proteins proliferating cell nuclear antigen (PCNA) and activator 1. Subunit 2 binds ATP and single-stranded DNA. The protein is Replication factor C subunit 2 (RFC2) of Phaeosphaeria nodorum (strain SN15 / ATCC MYA-4574 / FGSC 10173) (Glume blotch fungus).